The primary structure comprises 594 residues: NADH-quinone oxidoreductase subunit C/D (594 aa).

An NADH dehydrogenase I subunit C region spans residues 1-185; sequence MTTGSALYIP…DPFSLNLAKQ (185 aa). Residues 209-594 form an NADH dehydrogenase I subunit D region; the sequence is DYMFLNLGPN…IDFVMADVDR (386 aa).

In the N-terminal section; belongs to the complex I 30 kDa subunit family. This sequence in the C-terminal section; belongs to the complex I 49 kDa subunit family. In terms of assembly, NDH-1 is composed of 13 different subunits. Subunits NuoB, CD, E, F, and G constitute the peripheral sector of the complex.

It is found in the cell inner membrane. It catalyses the reaction a quinone + NADH + 5 H(+)(in) = a quinol + NAD(+) + 4 H(+)(out). NDH-1 shuttles electrons from NADH, via FMN and iron-sulfur (Fe-S) centers, to quinones in the respiratory chain. The immediate electron acceptor for the enzyme in this species is believed to be ubiquinone. Couples the redox reaction to proton translocation (for every two electrons transferred, four hydrogen ions are translocated across the cytoplasmic membrane), and thus conserves the redox energy in a proton gradient. In Pseudomonas fluorescens (strain SBW25), this protein is NADH-quinone oxidoreductase subunit C/D.